The primary structure comprises 175 residues: Phosphopantetheine adenylyltransferase (175 aa).

Residue Ser-10 coordinates substrate. Residues 10-11 (SF) and His-18 each bind ATP. Substrate is bound by residues Lys-42, Leu-74, and Arg-88. ATP is bound by residues 89-91 (GMR), Glu-99, and 124-130 (WIFTSSS).

This sequence belongs to the bacterial CoaD family. Homohexamer. Requires Mg(2+) as cofactor.

It localises to the cytoplasm. It carries out the reaction (R)-4'-phosphopantetheine + ATP + H(+) = 3'-dephospho-CoA + diphosphate. It participates in cofactor biosynthesis; coenzyme A biosynthesis; CoA from (R)-pantothenate: step 4/5. Functionally, reversibly transfers an adenylyl group from ATP to 4'-phosphopantetheine, yielding dephospho-CoA (dPCoA) and pyrophosphate. This is Phosphopantetheine adenylyltransferase from Desulfatibacillum aliphaticivorans.